We begin with the raw amino-acid sequence, 215 residues long: Transmembrane emp24 domain-containing protein 11 (215 aa).

Residues 1–17 (MQIQTILLCFSFSFSAA) form the signal peptide. The Lumenal portion of the chain corresponds to 18–167 (FYFHAGEREE…ILKEQDYQRD (150 aa)). Residues 27-125 (EKCIIEDIPS…KLRIHLDIRV (99 aa)) enclose the GOLD domain. A glycan (N-linked (GlcNAc...) asparagine) is linked at N105. The stretch at 136–171 (QAKDKVNEVTFKLQHLIEQVEQILKEQDYQRDREEN) forms a coiled coil. The chain crosses the membrane as a helical span at residues 168 to 185 (REENFRITSEDTNRNVLW). The Cytoplasmic portion of the chain corresponds to 186–215 (WAFAQILIFISVGIFQMKHLKDFFIAKKLV). Positions 208–209 (FF) match the COPII vesicle coat-binding motif. A COPI vesicle coat-binding motif is present at residues 208 to 215 (FFIAKKLV).

This sequence belongs to the EMP24/GP25L family.

The protein localises to the endoplasmic reticulum membrane. Functionally, part of a complex whose function is to bind Ca(2+) to the ER membrane and thereby regulate the retention of ER resident proteins. This chain is Transmembrane emp24 domain-containing protein 11 (Tmed11), found in Mus musculus (Mouse).